The following is a 243-amino-acid chain: Probable glycerol uptake facilitator protein (243 aa).

Transmembrane regions (helical) follow at residues 7–27 and 44–64; these read ILLG…GVCA and LLIA…SIQV. Residues 72-74 carry the NPA 1 motif; sequence NPA. The next 3 membrane-spanning stretches (helical) occupy residues 88–108, 143–163, and 166–186; these read IGLL…AQII, ISYE…GDYH, and TGVF…GCAI. Residues 187–189 carry the NPA 2 motif; the sequence is NPA. Residues 221-241 traverse the membrane as a helical segment; that stretch reads LVPLLAPIAAGLIMGGFSLLI.

The protein belongs to the MIP/aquaporin (TC 1.A.8) family.

It is found in the cell membrane. The enzyme catalyses glycerol(in) = glycerol(out). Mediates glycerol diffusion across the cytoplasmic membrane via a pore-type mechanism. This Mycoplasmoides gallisepticum (strain R(low / passage 15 / clone 2)) (Mycoplasma gallisepticum) protein is Probable glycerol uptake facilitator protein (glpF).